A 197-amino-acid chain; its full sequence is Recombination protein RecR (197 aa).

A C4-type zinc finger spans residues 56–71 (CHVCGNYCESDTCNIC). Residues 79–174 (RIICVVEESK…KITKLASGIP (96 aa)) form the Toprim domain.

It belongs to the RecR family.

May play a role in DNA repair. It seems to be involved in an RecBC-independent recombinational process of DNA repair. It may act with RecF and RecO. This chain is Recombination protein RecR, found in Fusobacterium nucleatum subsp. nucleatum (strain ATCC 25586 / DSM 15643 / BCRC 10681 / CIP 101130 / JCM 8532 / KCTC 2640 / LMG 13131 / VPI 4355).